The following is a 344-amino-acid chain: MPMQGAQRKLLGSLNSTPTATSNLGLAANHTGAPCLEVPIPDGLFLSLGLVSLVENVLVVAAIAKNRNLHSSMYCFICCLAVSDLLVSGSNMLETAIILLLEAGALVTRASVVQQLHNTIDVLTCSSMLCSLCFLGAIAVDRYISIFYALRYHSIMTLPRAQRAIAAIWVASVLSSTLFITYYDHAAVLLCLVVFFLAMLVLMAVLYVHMLARACQHAQGIIRLHKRQPPAHKGFGLRGAATLTILLGIFFLCWGPFFLHLTLVVFCPQHMTCSCIFKNFKVFLTLIICNTIIDPLIYAFRSQELRRTLKEVLLCSRWPGCWAEGGGDSVWPGSCVTLRGPLPP.

Topologically, residues 1–37 (MPMQGAQRKLLGSLNSTPTATSNLGLAANHTGAPCLE) are extracellular. N29 carries N-linked (GlcNAc...) asparagine glycosylation. A helical membrane pass occupies residues 38 to 63 (VPIPDGLFLSLGLVSLVENVLVVAAI). Residues 64–72 (AKNRNLHSS) lie on the Cytoplasmic side of the membrane. The helical transmembrane segment at 73–93 (MYCFICCLAVSDLLVSGSNML) threads the bilayer. The Extracellular portion of the chain corresponds to 94–118 (ETAIILLLEAGALVTRASVVQQLHN). Residues 119-140 (TIDVLTCSSMLCSLCFLGAIAV) traverse the membrane as a helical segment. Topologically, residues 141 to 163 (DRYISIFYALRYHSIMTLPRAQR) are cytoplasmic. A helical transmembrane segment spans residues 164–183 (AIAAIWVASVLSSTLFITYY). The Extracellular segment spans residues 184-191 (DHAAVLLC). The helical transmembrane segment at 192 to 211 (LVVFFLAMLVLMAVLYVHML) threads the bilayer. Residues 212–240 (ARACQHAQGIIRLHKRQPPAHKGFGLRGA) are Cytoplasmic-facing. A helical transmembrane segment spans residues 241-266 (ATLTILLGIFFLCWGPFFLHLTLVVF). Topologically, residues 267–279 (CPQHMTCSCIFKN) are extracellular. Residues 280-300 (FKVFLTLIICNTIIDPLIYAF) traverse the membrane as a helical segment. Over 301-344 (RSQELRRTLKEVLLCSRWPGCWAEGGGDSVWPGSCVTLRGPLPP) the chain is Cytoplasmic. The S-palmitoyl cysteine moiety is linked to residue C315.

Belongs to the G-protein coupled receptor 1 family. As to quaternary structure, interacts with MGRN1, but does not undergo MGRN1-mediated ubiquitination; this interaction competes with GNAS-binding and thus inhibits agonist-induced cAMP production. Interacts with OPN3; the interaction results in a decrease in MC1R-mediated cAMP signaling and ultimately a decrease in melanin production in melanocytes.

Its subcellular location is the cell membrane. Its function is as follows. Receptor for MSH (alpha, beta and gamma) and ACTH. The activity of this receptor is mediated by G proteins which activate adenylate cyclase. Mediates melanogenesis, the production of eumelanin (black/brown) and phaeomelanin (red/yellow), via regulation of cAMP signaling in melanocytes. This chain is Melanocyte-stimulating hormone receptor (MC1R), found in Callimico goeldii (Goeldi's marmoset).